A 900-amino-acid chain; its full sequence is Bifunctional uridylyltransferase/uridylyl-removing enzyme (900 aa).

Residues 1 to 342 are uridylyltransferase; sequence MPQVDPELFD…WEGESGPIVP (342 aa). Residues 343 to 705 form a uridylyl-removing region; that stretch reads LNSRFQVRDG…TTQREFEGGT (363 aa). The 123-residue stretch at 461–583 folds into the HD domain; it reads VDAHTLNVIK…VGDETHLDYL (123 aa). ACT domains follow at residues 706–789 and 816–896; these read QIFI…IIQR and ILEI…PSPS.

This sequence belongs to the GlnD family. Mg(2+) is required as a cofactor.

It carries out the reaction [protein-PII]-L-tyrosine + UTP = [protein-PII]-uridylyl-L-tyrosine + diphosphate. The enzyme catalyses [protein-PII]-uridylyl-L-tyrosine + H2O = [protein-PII]-L-tyrosine + UMP + H(+). Its activity is regulated as follows. Uridylyltransferase (UTase) activity is inhibited by glutamine, while glutamine activates uridylyl-removing (UR) activity. Modifies, by uridylylation and deuridylylation, the PII regulatory proteins (GlnB and homologs), in response to the nitrogen status of the cell that GlnD senses through the glutamine level. Under low glutamine levels, catalyzes the conversion of the PII proteins and UTP to PII-UMP and PPi, while under higher glutamine levels, GlnD hydrolyzes PII-UMP to PII and UMP (deuridylylation). Thus, controls uridylylation state and activity of the PII proteins, and plays an important role in the regulation of nitrogen fixation and metabolism. This is Bifunctional uridylyltransferase/uridylyl-removing enzyme from Stutzerimonas stutzeri (strain A1501) (Pseudomonas stutzeri).